Here is a 554-residue protein sequence, read N- to C-terminus: MELCTQTVAADHEVIITRRSGSHHPTLWGDHFLAYADLRGANEGEEKQNEDLKEEVRKMLVMAPSNSLEKLELINTIQCLGLAYHFQSEIDESLSYMYTHYEEYSIGDLHAIALCFRLLRQQGYYVSCDAFKKFTNDQGNFKEELVKDVEGMLSLYEAAQFRVHGEQILDEALNFTITKLKQILPKLSNSQLAQQITNALKFPIKDGIVRVETRKYISFYQQNQNHNQVLLNFAKLDFNILQTLHKKELSDMTRWWKKMELVNTLPYARDRLVECYFWCLGTYFEPQYSVARKMLTKISFFISIIDDTYDIYGKLDELTLFTQAIERWNIDASEQLPLYMKIIYRDLLDVYDEIEKELANENKSFLVNYSINEMKKVVRGYFQEAKWYYGKKVPKMEQYMKNAISTSAYILLTTTSWLAMGNVATKDVFDWVATEPKLVVASCHIIRLLNDLVSHEEEQKRGNAASAVECYMNEYSVTQEEAHVKIRDIIENYWKDLNEEYFKVDMIIIPRVLLMCIINLTRVAEFIYKDEDAYTFSKNNLKDVISDILVDPII.

Positions 306, 310, and 458 each coordinate Mg(2+). Positions 306–310 match the DDXXD motif motif; that stretch reads DDTYD.

This sequence belongs to the terpene synthase family. Tpsa subfamily. Mg(2+) serves as cofactor. Mn(2+) is required as a cofactor.

The catalysed reaction is (2E,6E)-farnesyl diphosphate = (+)-valencene + diphosphate. The enzyme catalyses (2E,6E)-farnesyl diphosphate = (E)-beta-farnesene + diphosphate. It carries out the reaction (2E,6E)-farnesyl diphosphate = gamma-gurjunene + diphosphate. It catalyses the reaction (2Z,6Z)-farnesyl diphosphate = beta-bisabolene + diphosphate. The catalysed reaction is (2Z,6Z)-farnesyl diphosphate = (E)-gamma-bisabolene + diphosphate. The enzyme catalyses (2E)-geranyl diphosphate = limonene + diphosphate. It carries out the reaction (2E)-geranyl diphosphate = beta-myrcene + diphosphate. It catalyses the reaction (2E)-geranyl diphosphate = (E)-beta-ocimene + diphosphate. The catalysed reaction is (2E)-geranyl diphosphate = terpinolene + diphosphate. The enzyme catalyses (2E)-geranyl diphosphate = gamma-terpinene + diphosphate. It carries out the reaction (2Z,6Z)-farnesyl diphosphate = (Z)-gamma-bisabolene + diphosphate. It catalyses the reaction (2E,6E)-farnesyl diphosphate = (1S,5S,6R)-alpha-bergamotene + diphosphate. The catalysed reaction is (2Z,6Z)-farnesyl diphosphate = (1S,5S,6S)-alpha-bergamotene + diphosphate. The protein operates within secondary metabolite biosynthesis; terpenoid biosynthesis. Sesquiterpene synthase involved in the biosynthesis of volatile compounds. Mediates the conversion of (2E,6E)-farnesyl diphosphate (FPP) into gamma-gurjunene, (E)-beta-farnesene and (+)-valencene, and of (2Z,6Z)-farnesyl diphosphate ((ZZ)-FPP) into (E)-alpha-bergamotene and (Z)-gamma-bisabolene as well as beta-bisabolene, (Z)-alpha-bergamotene and (E)-gamma-bisabolene to a lower extent. Can act with a low efficiency as a monoterpene synthase with geranyl diphosphate (GPP) as substrate, thus producing beta-myrcene, (E)-beta-ocimene, limonene, terpinolene, gamma-terpinene and (Z)-beta-ocimene. The polypeptide is Terpene synthase 17 (Solanum habrochaites (Wild tomato)).